Here is a 315-residue protein sequence, read N- to C-terminus: Ester hydrolase C11orf54 homolog (315 aa).

Residues H266, H268, and H278 each contribute to the Zn(2+) site.

Monomer.

The protein resides in the nucleus. Functionally, exhibits ester hydrolase activity on the substrate p-nitrophenyl acetate. The sequence is that of Ester hydrolase C11orf54 homolog from Bos taurus (Bovine).